Consider the following 202-residue polypeptide: Putative 5'(3')-deoxyribonucleotidase (202 aa).

Residue Asp22 is the Nucleophile of the active site. Positions 22, 24, and 156 each coordinate Mg(2+). Asp24 acts as the Proton donor in catalysis.

The protein belongs to the 5'(3')-deoxyribonucleotidase family. Mg(2+) is required as a cofactor.

Its function is as follows. Dephosphorylates the 5' and 2'(3')-phosphates of deoxyribonucleotides. The polypeptide is Putative 5'(3')-deoxyribonucleotidase (Chlorobaculum tepidum (strain ATCC 49652 / DSM 12025 / NBRC 103806 / TLS) (Chlorobium tepidum)).